A 629-amino-acid polypeptide reads, in one-letter code: Protein SPT2 homolog (629 aa).

An important for interaction with DNA region spans residues 1 to 522; the sequence is MDFDSVLSIA…SGHRILVKPS (522 aa). Residues 45 to 72 adopt a coiled-coil conformation; that stretch reads QAFLKKKAVEQKNKEQQDKKAKEDLLAK. Residues 53–93 are compositionally biased toward basic and acidic residues; the sequence is VEQKNKEQQDKKAKEDLLAKRVELKSDRKARAMASRTKDNF. 3 disordered regions span residues 53–181, 206–533, and 608–629; these read VEQK…ASSS, KTEE…TSSY, and EDEE…KKRK. Polar residues predominate over residues 111 to 123; that stretch reads KGSSTEEQQSSTK. Residues 127 to 144 are compositionally biased toward acidic residues; the sequence is GDYDDEDNFDYEGTDSES. A coiled-coil region spans residues 203 to 228; sequence VVKKTEERLRTAEEIRELEMERRVKK. Basic and acidic residues-rich tracts occupy residues 206–247 and 257–277; these read KTEE…KDSR and KHVD…EKHQ. Composition is skewed to polar residues over residues 278–297, 305–327, 335–345, 353–364, 387–398, 437–450, and 462–490; these read SSST…TPTS, SNSG…SFQA, SQGQRPATPSD, VSLTQAKSSISG, SNFSTSGPSQKP, NLQS…SRAS, and SGSQ…TKNI. Positions 523-629 are important for interaction with histones; sequence GPALPPITSS…MQRKNAKKRK (107 aa). The stretch at 591 to 629 forms a coiled coil; the sequence is WKEQQKEEARSLRMAVLEDEEEERRELEEMQRKNAKKRK.

Belongs to the SPT2 family. As to quaternary structure, interacts with histones. Interacts with a heterotetrameric complex formed by histone H3 and H4, especially when the histone tetramer is not bound to DNA.

The protein resides in the nucleus. It is found in the nucleolus. Functionally, histone chaperone that stabilizes pre-existing histone tetramers and regulates replication-independent histone exchange on chromatin. Required for normal chromatin refolding in the coding region of transcribed genes, and for the suppression of spurious transcription. Binds DNA and histones and promotes nucleosome assembly (in vitro). Facilitates formation of tetrameric histone complexes containing histone H3 and H4. Modulates RNA polymerase 1-mediated transcription. Binds DNA, with a preference for branched DNA species, such as Y-form DNA and Holliday junction DNA. This Danio rerio (Zebrafish) protein is Protein SPT2 homolog (spty2d1).